The sequence spans 1051 residues: Transcription intermediary factor 1-alpha (1051 aa).

Residues Met1–Glu42 are disordered. Lys7 is covalently cross-linked (Glycyl lysine isopeptide (Lys-Gly) (interchain with G-Cter in SUMO2)). Residues Ala8 to Pro23 show a composition bias toward low complexity. The RING-type zinc finger occupies Cys52–Cys77. The interval Ser94–Pro115 is disordered. Thr97 carries the phosphothreonine modification. Pro residues predominate over residues Thr97–Gly109. At Ser110 the chain carries Phosphoserine. 2 consecutive B box-type zinc fingers follow at residues Lys158–Glu211 and Gln218–Ile259. Zn(2+)-binding residues include Cys163, Cys166, Cys187, and His200. Lys205 is covalently cross-linked (Glycyl lysine isopeptide (Lys-Gly) (interchain with G-Cter in SUMO2)). Positions 223, 226, 246, and 251 each coordinate Zn(2+). Lys276 is covalently cross-linked (Glycyl lysine isopeptide (Lys-Gly) (interchain with G-Cter in SUMO2)). The stretch at Asn289–Val359 forms a coiled coil. A disordered region spans residues Glu429–Ser457. Polar residues predominate over residues Gln431 to Ser457. Glycyl lysine isopeptide (Lys-Gly) (interchain with G-Cter in SUMO2) cross-links involve residues Lys436 and Lys458. Arg469 is subject to Omega-N-methylarginine. Composition is skewed to low complexity over residues Ala479–Pro490 and Pro501–Gln510. Residues Ala479 to Thr551 are disordered. Over residues Pro526–Pro535 the composition is skewed to pro residues. Polar residues predominate over residues Leu538–Thr551. Glycyl lysine isopeptide (Lys-Gly) (interchain with G-Cter in SUMO2) cross-links involve residues Lys553 and Lys642. The tract at residues Thr644–Val713 is disordered. A phosphoserine mark is found at Ser655, Ser661, and Ser668. Positions Ser655–Pro667 are enriched in polar residues. The segment covering Ser686–Asp708 has biased composition (low complexity). Glycyl lysine isopeptide (Lys-Gly) (interchain with G-Cter in SUMO2) cross-links involve residues Lys703 and Lys712. Glycyl lysine isopeptide (Lys-Gly) (interchain with G-Cter in SUMO); alternate cross-links involve residues Lys724 and Lys742. Lys724 participates in a covalent cross-link: Glycyl lysine isopeptide (Lys-Gly) (interchain with G-Cter in SUMO1); alternate. Glycyl lysine isopeptide (Lys-Gly) (interchain with G-Cter in SUMO2); alternate cross-links involve residues Lys724 and Lys742. Ser745 and Ser769 each carry phosphoserine. The tract at residues Asn755–Arg780 is nuclear receptor binding site (NRBS). Positions Ser771–Glu827 are disordered. A compositionally biased stretch (polar residues) spans Gln795–Ser812. A Glycyl lysine isopeptide (Lys-Gly) (interchain with G-Cter in SUMO2) cross-link involves residue Lys802. Ser809 is subject to Phosphoserine. A Glycyl lysine isopeptide (Lys-Gly) (interchain with G-Cter in SUMO2) cross-link involves residue Lys811. The residue at position 812 (Ser812) is a Phosphoserine. Phosphothreonine is present on Thr819. The segment at Glu827–Leu874 adopts a PHD-type zinc-finger fold. Residues Asn835 to Cys841 form an interaction with histone H3 that is not methylated at 'Lys-4' (H3K4me0) region. A Glycyl lysine isopeptide (Lys-Gly) (interchain with G-Cter in SUMO2) cross-link involves residue Lys876. The short motif at Lys892–Lys908 is the Nuclear localization signal element. The 106-residue stretch at Lys900–Leu1005 folds into the Bromo domain. Glycyl lysine isopeptide (Lys-Gly) (interchain with G-Cter in SUMO2) cross-links involve residues Lys950 and Lys993. Residues Lys1024–Lys1051 form a disordered region. Ser1026 and Ser1029 each carry phosphoserine. A Glycyl lysine isopeptide (Lys-Gly) (interchain with G-Cter in SUMO2) cross-link involves residue Lys1042. The span at Lys1042–Lys1051 shows a compositional bias: basic and acidic residues. Residue Ser1043 is modified to Phosphoserine.

In terms of assembly, interacts (via bromo domain) with histone H3 (via N-terminus), provided that it is not methylated at 'Lys-4' (H3K4me0). Does not interact with histone H3 that is methylated at 'Lys-4' (H3K4me1, H3K4me2 or H3K4me3). Interacts (via bromo domain) with histone H3 (via N-terminus) that is acetylated at 'Lys-23' (H3K23ac). Has the highest affinity for histone H3 that is both unmodified at 'Lys-4' (H3K4me0) and acetylated at 'Lys-23' (H3K23ac). Has very low affinity for histone H3 that is methylated at 'Lys-9' (H3K9me), or acetylated at both 'Lys-9' (H3K9ac) and 'Lys-14' (H3K14ac), or acetylated at 'Lys-27' (H3K27ac) (in vitro). Interacts with TRIM16. Interacts with NR3C2/MCR. Interacts with the ligand-binding domain of estrogen receptors (in vitro). Interaction with DNA-bound estrogen receptors requires the presence of estradiol. Interacts with AR, CARM1, KAT5/TIP60, NCOA2/GRIP1, BRD7, CBX1, CBX3 and CBX5. Part of a coactivator complex containing TRIM24, NCOA2/GRIP1 and CARM1. Interacts with p53/TP53 and PML. In terms of processing, sumoylated. Post-translationally, phosphorylated at Ser-768 by ATM kinase induces ubiquitination and degradation during DNA damage. Undergoes ubiquitination-mediated degradation in response to DNA damage. In terms of tissue distribution, detected in embryonic and adult liver. Detected in zygote and throughout embryogenesis (at protein level). Detected in all adult tissues, with the highest expression level in testis.

The protein resides in the nucleus. It is found in the cytoplasm. The catalysed reaction is S-ubiquitinyl-[E2 ubiquitin-conjugating enzyme]-L-cysteine + [acceptor protein]-L-lysine = [E2 ubiquitin-conjugating enzyme]-L-cysteine + N(6)-ubiquitinyl-[acceptor protein]-L-lysine.. It functions in the pathway protein modification; protein ubiquitination. Transcriptional coactivator that interacts with numerous nuclear receptors and coactivators and modulates the transcription of target genes. Interacts with chromatin depending on histone H3 modifications, having the highest affinity for histone H3 that is both unmodified at 'Lys-4' (H3K4me0) and acetylated at 'Lys-23' (H3K23ac). Has E3 protein-ubiquitin ligase activity. Promotes ubiquitination and proteasomal degradation of p53/TP53. Plays a role in the regulation of cell proliferation and apoptosis via its effects on p53/TP53 levels. Up-regulates ligand-dependent transcription activation by AR, GCR/NR3C1, thyroid hormone receptor (TR) and ESR1. Modulates transcription activation by retinoic acid (RA) receptors, such as RARA. Plays a role in regulating retinoic acid-dependent proliferation of hepatocytes. Required for normal transition from proliferating neonatal hepatocytes to quiescent adult hepatocytes. Functionally, transcriptional coactivator that interacts with numerous nuclear receptors and coactivators and modulates the transcription of target genes. Interacts with chromatin depending on histone H3 modifications, having the highest affinity for histone H3 that is both unmodified at 'Lys-4' (H3K4me0) and acetylated at 'Lys-23' (H3K23ac). Has E3 protein-ubiquitin ligase activity. During the DNA damage response, participates in an autoregulatory feedback loop with TP53. Early in response to DNA damage, ATM kinase phosphorylates TRIM24 leading to its ubiquitination and degradation. After sufficient DNA repair has occurred, TP53 activates TRIM24 transcription, ultimately leading to TRIM24-mediated TP53 ubiquitination and degradation. Plays a role in the regulation of cell proliferation and apoptosis, at least in part via its effects on p53/TP53 levels. Up-regulates ligand-dependent transcription activation by AR, GCR/NR3C1, thyroid hormone receptor (TR) and ESR1. Modulates transcription activation by retinoic acid (RA) receptors, including RARA. Plays a role in regulating retinoic acid-dependent proliferation of hepatocytes. Also participates in innate immunity by mediating the specific 'Lys-63'-linked ubiquitination of TRAF3 leading to activation of downstream signal transduction of the type I IFN pathway. Additionally, negatively regulates NLRP3/CASP1/IL-1beta-mediated pyroptosis and cell migration probably by ubiquitinating NLRP3. This is Transcription intermediary factor 1-alpha (Trim24) from Mus musculus (Mouse).